Here is a 230-residue protein sequence, read N- to C-terminus: Cyclin-dependent kinase inhibitor rum1 (230 aa).

Disordered regions lie at residues Met-1–Gly-25, Pro-43–Tyr-118, and Ser-188–Arg-230. Thr-13 bears the Phosphothreonine; by MAPK mark. Ser-19 is subject to Phosphoserine; by MAPK. 2 positions are modified to phosphothreonine; by cdc2: Thr-58 and Thr-62. Positions Leu-67–Asp-147 are CDK inhibitory and cyclin-binding. The segment covering Asn-78–Asn-91 has biased composition (basic and acidic residues). Residues Phe-93–Leu-102 show a composition bias toward polar residues. Residues Leu-101–Arg-230 form a required for activity as a cdc2 kinase inhibitor region. Residues Ser-188–Val-199 are compositionally biased toward low complexity. Residues Asn-219–Arg-230 show a composition bias toward basic and acidic residues.

Interacts with cdc13, cig2 and pop1. Post-translationally, phosphorylated by cig1-associated cdc2 which leads to increased stability. Phosphorylation by MAPK reduces cdc2 kinase inhibitor ability.

It is found in the nucleus. In terms of biological role, regulator of cell cycle G1 phase progression. Ensures the correct sequence of S phase and mitosis in the cell by acting as an inhibitor of the cdc2 mitotic kinase. Probably interacts with cdc2 to inhibit its action until the cell mass for Start is reached. Determines the length of the pre-Start G1 period and prevents mitosis from happening in early G1 cells. Required for maintaining pheromone-induced G1 arrest. Acts as an adapter protein since interaction with cdc13 promotes cyclin proteolysis during G1. Becomes a target for degradation at the G1/S phase transition, following phosphorylation by cig1-associated cdc2 at the G1/S phase transition. This Schizosaccharomyces pombe (strain 972 / ATCC 24843) (Fission yeast) protein is Cyclin-dependent kinase inhibitor rum1 (rum1).